A 607-amino-acid polypeptide reads, in one-letter code: Elongation factor 4 (607 aa).

Positions Ser11–Thr193 constitute a tr-type G domain. GTP is bound by residues Asp23–Thr28 and Asn140–Asp143.

The protein belongs to the TRAFAC class translation factor GTPase superfamily. Classic translation factor GTPase family. LepA subfamily.

The protein localises to the cell membrane. The catalysed reaction is GTP + H2O = GDP + phosphate + H(+). Required for accurate and efficient protein synthesis under certain stress conditions. May act as a fidelity factor of the translation reaction, by catalyzing a one-codon backward translocation of tRNAs on improperly translocated ribosomes. Back-translocation proceeds from a post-translocation (POST) complex to a pre-translocation (PRE) complex, thus giving elongation factor G a second chance to translocate the tRNAs correctly. Binds to ribosomes in a GTP-dependent manner. In Bacillus cereus (strain ATCC 10987 / NRS 248), this protein is Elongation factor 4.